A 159-amino-acid chain; its full sequence is Ribosomal RNA large subunit methyltransferase H (159 aa).

S-adenosyl-L-methionine is bound by residues L76, G108, and 127-132 (FGRLTL).

The protein belongs to the RNA methyltransferase RlmH family. Homodimer.

Its subcellular location is the cytoplasm. The enzyme catalyses pseudouridine(1915) in 23S rRNA + S-adenosyl-L-methionine = N(3)-methylpseudouridine(1915) in 23S rRNA + S-adenosyl-L-homocysteine + H(+). Its function is as follows. Specifically methylates the pseudouridine at position 1915 (m3Psi1915) in 23S rRNA. The chain is Ribosomal RNA large subunit methyltransferase H from Streptococcus uberis (strain ATCC BAA-854 / 0140J).